A 448-amino-acid chain; its full sequence is Elongation factor 1-alpha (448 aa).

The 226-residue stretch at 5 to 230 folds into the tr-type G domain; the sequence is KIHISIVVIG…DQINEPKRPS (226 aa). The segment at 14–21 is G1; that stretch reads GHVDSGKS. 14–21 serves as a coordination point for GTP; sequence GHVDSGKS. Lys-55 bears the N6,N6-dimethyllysine mark. The interval 70 to 74 is G2; the sequence is GITID. N6,N6,N6-trimethyllysine is present on Lys-79. Positions 91 to 94 are G3; the sequence is DAPG. GTP contacts are provided by residues 91–95 and 153–156; these read DAPGH and NKMD. The tract at residues 153 to 156 is G4; the sequence is NKMD. Lys-187 bears the N6,N6,N6-trimethyllysine mark. Residues 194 to 196 form a G5 region; that stretch reads SGF. Lys-261 is modified (N6-methyllysine). Position 289 is a 5-glutamyl glycerylphosphorylethanolamine (Glu-289). Lys-306 is subject to N6,N6,N6-trimethyllysine. 5-glutamyl glycerylphosphorylethanolamine is present on Glu-362. Lys-396 bears the N6,N6,N6-trimethyllysine mark.

This sequence belongs to the TRAFAC class translation factor GTPase superfamily. Classic translation factor GTPase family. EF-Tu/EF-1A subfamily.

Its subcellular location is the cytoplasm. Its function is as follows. This protein promotes the GTP-dependent binding of aminoacyl-tRNA to the A-site of ribosomes during protein biosynthesis. The polypeptide is Elongation factor 1-alpha (Solanum lycopersicum (Tomato)).